A 211-amino-acid chain; its full sequence is Large ribosomal subunit protein uL4 (211 aa).

The segment covering 41 to 53 has biased composition (polar residues); sequence QAHSRQGTASTLT. Residues 41–78 are disordered; it reads QAHSRQGTASTLTRAEVRGGGRKPYKQKGTGRARQGTI. The span at 60–71 shows a compositional bias: basic residues; the sequence is GGRKPYKQKGTG.

It belongs to the universal ribosomal protein uL4 family. In terms of assembly, part of the 50S ribosomal subunit.

Functionally, one of the primary rRNA binding proteins, this protein initially binds near the 5'-end of the 23S rRNA. It is important during the early stages of 50S assembly. It makes multiple contacts with different domains of the 23S rRNA in the assembled 50S subunit and ribosome. In terms of biological role, forms part of the polypeptide exit tunnel. This Prochlorococcus marinus (strain MIT 9303) protein is Large ribosomal subunit protein uL4.